The primary structure comprises 199 residues: UPF0329 protein ECU01_0120/ECU01_1490/ECU08_0050 (199 aa).

Belongs to the UPF0329 family.

In Encephalitozoon cuniculi (strain GB-M1) (Microsporidian parasite), this protein is UPF0329 protein ECU01_0120/ECU01_1490/ECU08_0050.